Here is a 147-residue protein sequence, read N- to C-terminus: Hemoglobin subunit beta (147 aa).

Val-2 bears the N-acetylvaline mark. One can recognise a Globin domain in the interval 3–147 (HLTGEEKAAV…VANALAHKYH (145 aa)). At Thr-13 the chain carries Phosphothreonine. Phosphoserine is present on Ser-45. The residue at position 60 (Lys-60) is an N6-acetyllysine. His-64 lines the heme b pocket. Lys-83 bears the N6-acetyllysine mark. Residue His-93 participates in heme b binding. Cys-94 is modified (S-nitrosocysteine). Position 145 is an N6-acetyllysine (Lys-145).

It belongs to the globin family. As to quaternary structure, heterotetramer of two alpha chains and two beta chains. Red blood cells.

Involved in oxygen transport from the lung to the various peripheral tissues. This chain is Hemoglobin subunit beta (HBB), found in Aotus azarae (Azara's night monkey).